A 449-amino-acid polypeptide reads, in one-letter code: XK-related protein 2 (449 aa).

A run of 10 helical transmembrane segments spans residues 35-55 (FSIL…LYMV), 68-88 (TYTF…LIFV), 98-118 (LSLF…EAMI), 174-194 (IQAF…SLIS), 202-222 (VVLM…CNML), 241-261 (LCIT…LVLF), 269-289 (AVPF…IKFW), 306-326 (VGTL…NFSC), 357-377 (LVEN…VLLN), and 382-402 (LIAL…LLFF).

It belongs to the XK family. Expressed predominantly in the placenta, in syncytiotrophoblasts. Moderate levels in the adrenal gland, low levels in the trachea and very low levels in the bone marrow.

The protein localises to the cell membrane. The polypeptide is XK-related protein 2 (XKRX) (Homo sapiens (Human)).